The primary structure comprises 333 residues: Adenosine deaminase (333 aa).

Residues His12 and His14 each contribute to the Zn(2+) site. Substrate contacts are provided by His14, Asp16, and Gly170. Position 197 (His197) interacts with Zn(2+). Glu200 acts as the Proton donor in catalysis. Position 278 (Asp278) interacts with Zn(2+). Asp279 lines the substrate pocket.

Belongs to the metallo-dependent hydrolases superfamily. Adenosine and AMP deaminases family. Adenosine deaminase subfamily. It depends on Zn(2+) as a cofactor.

It carries out the reaction adenosine + H2O + H(+) = inosine + NH4(+). The enzyme catalyses 2'-deoxyadenosine + H2O + H(+) = 2'-deoxyinosine + NH4(+). In terms of biological role, catalyzes the hydrolytic deamination of adenosine and 2-deoxyadenosine. This chain is Adenosine deaminase, found in Salmonella typhi.